Reading from the N-terminus, the 86-residue chain is Small ribosomal subunit protein bS18 (86 aa).

It belongs to the bacterial ribosomal protein bS18 family. As to quaternary structure, part of the 30S ribosomal subunit. Forms a tight heterodimer with protein bS6.

Functionally, binds as a heterodimer with protein bS6 to the central domain of the 16S rRNA, where it helps stabilize the platform of the 30S subunit. The polypeptide is Small ribosomal subunit protein bS18 (Campylobacter lari (strain RM2100 / D67 / ATCC BAA-1060)).